The chain runs to 485 residues: Zinc finger SWIM domain-containing protein 1 (485 aa).

The SWIM-type zinc finger occupies 363 to 405 (MNIQILEDTHKVQPQPPASCSCYFNQAFHLPCRHILAMLSARR).

The polypeptide is Zinc finger SWIM domain-containing protein 1 (ZSWIM1) (Homo sapiens (Human)).